Here is a 444-residue protein sequence, read N- to C-terminus: MSEMTPREIVHELDSHIIGQDKAKRSVAIALRNRWRRMQLAPELRTEVTPKNILMIGPTGVGKTEIARRLAKLANAPFIKVEATKFTEVGYVGKEVESIIRDLTDVAIKMTHQQAVEKVKFRAEEHAEDRILDILLPPARDAWGNNEEGDNDSGTRQSFRKKLREGKLDDKEIEVDVAAPQVGVEIMAPPGMEEMTNQLQGMFQNLSGGNTTKKRKMKIVDALKALTEEEGAKLVNPEELKEQAIFNVENHGIVFIDEIDKICKGSNSHSGDVSREGVQRDLLPLVEGSTVSTKHGMVKTDHMLFITSGAFQMAKPSDLIPELQGRLPIRVELEALTANDFKRILTEPNASLTEQYIALLATENVKVEFTEDGISRIAESAFQVNETTENIGARRLHTVMERLMEEISYDASEKNGESLIVDAEYVSSRLGELVADEDLSRFIL.

Residues Ile18 and 60–65 (GVGKTE) each bind ATP. Residues 141–161 (DAWGNNEEGDNDSGTRQSFRK) are disordered. Residues Asp257, Glu322, and Arg394 each contribute to the ATP site.

Belongs to the ClpX chaperone family. HslU subfamily. In terms of assembly, a double ring-shaped homohexamer of HslV is capped on each side by a ring-shaped HslU homohexamer. The assembly of the HslU/HslV complex is dependent on binding of ATP.

It is found in the cytoplasm. Its function is as follows. ATPase subunit of a proteasome-like degradation complex; this subunit has chaperone activity. The binding of ATP and its subsequent hydrolysis by HslU are essential for unfolding of protein substrates subsequently hydrolyzed by HslV. HslU recognizes the N-terminal part of its protein substrates and unfolds these before they are guided to HslV for hydrolysis. In Aliivibrio fischeri (strain MJ11) (Vibrio fischeri), this protein is ATP-dependent protease ATPase subunit HslU.